The following is a 249-amino-acid chain: Undecaprenyl-diphosphatase (249 aa).

A run of 8 helical transmembrane segments spans residues 11 to 31 (GLTEFLPISSSGHLAIFTAIF), 35 to 55 (PDVGYFAFLHLATFLAVLIFV), 80 to 100 (LVLSTIPAVIVGLCFGDFIES), 101 to 121 (VFSSTFLIGVFLSITGILMLL), 135 to 155 (IPYLDALIVGIFQAFSVLPGI), 180 to 200 (FLMSLPVTFGAGILELQKVAF), 202 to 222 (TEQIFGFFISFLTGLLGLYLV), and 226 to 246 (VIGGKLKIFGYYCVLASFFVL).

This sequence belongs to the UppP family.

It is found in the cell membrane. It carries out the reaction di-trans,octa-cis-undecaprenyl diphosphate + H2O = di-trans,octa-cis-undecaprenyl phosphate + phosphate + H(+). Functionally, catalyzes the dephosphorylation of undecaprenyl diphosphate (UPP). In Methanococcus maripaludis (strain C6 / ATCC BAA-1332), this protein is Undecaprenyl-diphosphatase.